The primary structure comprises 367 residues: Probable butyrate kinase (367 aa).

This sequence belongs to the acetokinase family.

It is found in the cytoplasm. The enzyme catalyses butanoate + ATP = butanoyl phosphate + ADP. The chain is Probable butyrate kinase from Bacillus cytotoxicus (strain DSM 22905 / CIP 110041 / 391-98 / NVH 391-98).